The chain runs to 141 residues: Hemoglobin subunit alpha-D (141 aa).

The 141-residue stretch at 1 to 141 folds into the Globin domain; it reads MLTADDKKLI…VASVLAEKYR (141 aa). Positions 58 and 87 each coordinate heme b.

It belongs to the globin family. Heterotetramer of two alpha-D chains and two beta chains. Red blood cells.

Functionally, involved in oxygen transport from the lung to the various peripheral tissues. This chain is Hemoglobin subunit alpha-D (HBAD), found in Rhea americana (Greater rhea).